Here is a 701-residue protein sequence, read N- to C-terminus: L-glutamate oxidase precursor (701 aa).

A signal peptide spans 1-14; the sequence is MTTDTARRHTGAER. 8 residues coordinate FAD: A69, E88, A89, R97, M123, R124, M354, and S409. A propeptide spanning residues 481 to 520 is cleaved from the precursor; that stretch reads LALPQSVRNLPTGLLGAHPSVDESRIGEEQVEYYRNSELR. FAD is bound by residues E645, W653, and I654. Positions 684–701 are excised as a propeptide; sequence RRGAAAATEPMREEALTS.

The protein belongs to the flavin monoamine oxidase family. LGOX subfamily. In terms of assembly, the LGOX precursor forms homodimers. The mature enzyme is a heterohexamer composed of 2 alpha chains, 2 beta chains and 2 gamma chains (alpha2beta2gamma2). It depends on FAD as a cofactor. Post-translationally, the precursor form is proteolytically cleaved by an endopeptidase into alpha, beta and gamma chains, which form the stable mature enzyme. Activation by proteolysis occurs after secretion.

Its subcellular location is the secreted. It catalyses the reaction L-glutamate + O2 + H2O = H2O2 + 2-oxoglutarate + NH4(+). With respect to regulation, produced as a single polypeptide precursor and is activated by proteolytic cleavage. The LGOX precursor is an active enzyme, but it exhibits lower catalytic efficiency and lower thermostability compared with the mature hexameric LGOX. The mature form is strongly inhibited by p-chloromercuribenzoate, but not by CuCl(2), EDTA and diethyldithiocarbamate. In terms of biological role, catalyzes the oxidative deamination of L-glutamate to 2-ketoglutarate along with the production of ammonia and hydrogen peroxide. Shows strict substrate specificity for L-glutamate, and exhibits only very weak activity with L-aspartate. The chain is L-glutamate oxidase precursor from Streptomyces sp.